The following is a 248-amino-acid chain: Ureidoacrylate amidohydrolase RutB (248 aa).

Asp-43 (proton acceptor) is an active-site residue. Lys-152 is a catalytic residue. Cys-185 serves as the catalytic Nucleophile.

Belongs to the isochorismatase family. RutB subfamily.

It catalyses the reaction (Z)-3-ureidoacrylate + H2O + H(+) = (Z)-3-aminoacrylate + NH4(+) + CO2. The catalysed reaction is (Z)-3-ureidoacrylate + H2O = (Z)-3-aminoacrylate + carbamate + H(+). It carries out the reaction (Z)-2-methylureidoacrylate + H2O + H(+) = (Z)-2-methylaminoacrylate + NH4(+) + CO2. Functionally, hydrolyzes ureidoacrylate to form aminoacrylate and carbamate. The carbamate hydrolyzes spontaneously, thereby releasing one of the nitrogen atoms of the pyrimidine ring as ammonia and one of its carbon atoms as CO2. In Serratia proteamaculans (strain 568), this protein is Ureidoacrylate amidohydrolase RutB.